The sequence spans 757 residues: MDVNPTLLFLKVPAQNAISTTFPYTGDPPYSHGTGTGYTMDTVNRTHQYSEKGKWTTNTETGAPQLNPIDGPLPEDNEPSGYAQTDCVLEAMAFLEESHPGIFENSCLETMEVVQQTRVDRLTQGRQTYDWTLNRNQPAATALANTIEVFRSNGLTANESGRLIDFLKDVMESMDKEEMEITTHFQRKRRVRDNMTKKMVTQRTIGKKKQRVNKRSYLIRALTLNTMTKDAERGKLKRRAIATPGMQIRGFVYFVETLARSICEKLEQSGLPVGGNEKKAKLANVVRKMMTNSQDTELSFTITGDNTKWNENQNPRMFLAMITYITKNQPEWFRNILSIAPIMFSNKMARLGKGYMFESKRMKLRTQIPAEMLASIDLKYFNESTRKKIEKIRPLLIDGTASLSPGMMMGMFNMLSTVLGVSILNLGQKKYTKTTYWWDGLQSSDDFALIVNAPNHEGIQAGVDRFYRTCKLVGINMSKKKSYINRTGTFEFTSFFYRYGFVANFSMELPSFGVSGINESADMSIGVTVIKNNMINNDLGPATAQMALQLFIKDYRYTYRCHRGDTQIQTRRSFELKKLWEQTRSKAGLLVSDGGPNLYNIRNLHIPEVCLKWELMDEDYQGRLCNPLNPFVSHKEIESVNNAVVMPAHGPAKSMEYDAVATTHSWIPKRNRSILNTSQRGILEDEQMYQKCCNLFEKFFPSSSYRRPVGISSMVEAMVSRARIDARIDFESGRIKKEEFSEIMKICSTIEELRRQK.

Residues 50–82 are disordered; that stretch reads SEKGKWTTNTETGAPQLNPIDGPLPEDNEPSGY. Polar residues predominate over residues 55-64; it reads WTTNTETGAP. Short sequence motifs (nuclear localization signal) lie at residues 187-195 and 203-216; these read RKRRVRDNM and RTIG…NKRS. The promoter-binding site stretch occupies residues 249 to 256; it reads RGFVYFVE. The 198-residue stretch at 286–483 folds into the RdRp catalytic domain; it reads VRKMMTNSQD…GINMSKKKSY (198 aa).

Belongs to the influenza viruses polymerase PB1 family. In terms of assembly, influenza RNA polymerase is composed of three subunits: PB1, PB2 and PA. Interacts (via N-terminus) with PA (via C-terminus). Interacts (via C-terminus) with PB2 (via N-terminus); this interaction is essential for transcription initiation. In terms of processing, phosphorylated by host PRKCA.

It localises to the host nucleus. Its subcellular location is the host cytoplasm. It catalyses the reaction RNA(n) + a ribonucleoside 5'-triphosphate = RNA(n+1) + diphosphate. RNA-dependent RNA polymerase which is responsible for replication and transcription of virus RNA segments. The transcription of viral mRNAs occurs by a unique mechanism called cap-snatching. 5' methylated caps of cellular mRNAs are cleaved after 10-13 nucleotides by PA. In turn, these short capped RNAs are used as primers by PB1 for transcription of viral mRNAs. During virus replication, PB1 initiates RNA synthesis and copy vRNA into complementary RNA (cRNA) which in turn serves as a template for the production of more vRNAs. The sequence is that of RNA-directed RNA polymerase catalytic subunit from Influenza A virus (strain A/Port Chalmers/1/1973 H3N2).